The primary structure comprises 545 residues: Probable sucrose-6-phosphate hydrolase (545 aa).

Substrate is bound by residues 107–110 (LLND), Gln-126, 169–170 (FS), 230–231 (RD), and Glu-285. Asp-110 is an active-site residue.

It belongs to the glycosyl hydrolase 32 family.

The protein localises to the cytoplasm. The catalysed reaction is Hydrolysis of terminal non-reducing beta-D-fructofuranoside residues in beta-D-fructofuranosides.. It functions in the pathway glycan biosynthesis; sucrose metabolism. Functionally, enables the bacterium to metabolize sucrose as a sole carbon source. The sequence is that of Probable sucrose-6-phosphate hydrolase from Psychromonas ingrahamii (strain DSM 17664 / CCUG 51855 / 37).